Consider the following 264-residue polypeptide: Small ribosomal subunit protein eS1A (264 aa).

Residues 233–264 (GEGGGTGKPAGDETGAKVERADGYEPPVQESV) form a disordered region. Residues 242 to 255 (AGDETGAKVERADG) show a composition bias toward basic and acidic residues.

Belongs to the eukaryotic ribosomal protein eS1 family. Component of the small ribosomal subunit. Mature ribosomes consist of a small (40S) and a large (60S) subunit. The 40S subunit contains about 33 different proteins and 1 molecule of RNA (18S). The 60S subunit contains about 49 different proteins and 3 molecules of RNA (28S, 5.8S and 5S). Part of the small subunit (SSU) processome, composed of more than 70 proteins and the RNA chaperone small nucleolar RNA (snoRNA) U3.

It localises to the cytoplasm. Its subcellular location is the nucleus. The protein resides in the nucleolus. Functionally, component of the small ribosomal subunit. The ribosome is a large ribonucleoprotein complex responsible for the synthesis of proteins in the cell. Part of the small subunit (SSU) processome, first precursor of the small eukaryotic ribosomal subunit. During the assembly of the SSU processome in the nucleolus, many ribosome biogenesis factors, an RNA chaperone and ribosomal proteins associate with the nascent pre-rRNA and work in concert to generate RNA folding, modifications, rearrangements and cleavage as well as targeted degradation of pre-ribosomal RNA by the RNA exosome. May play a role during erythropoiesis. The chain is Small ribosomal subunit protein eS1A (rps3a-a) from Xenopus laevis (African clawed frog).